A 305-amino-acid chain; its full sequence is Formamidopyrimidine-DNA glycosylase (305 aa).

The active-site Schiff-base intermediate with DNA is the Pro2. Glu3 functions as the Proton donor in the catalytic mechanism. Lys59 functions as the Proton donor; for beta-elimination activity in the catalytic mechanism. DNA contacts are provided by His92, Arg111, and Arg154. The FPG-type zinc finger occupies Gln239–Pro273. Arg263 functions as the Proton donor; for delta-elimination activity in the catalytic mechanism. A disordered region spans residues Pro282–Glu305.

It belongs to the FPG family. Monomer. Zn(2+) is required as a cofactor.

The enzyme catalyses Hydrolysis of DNA containing ring-opened 7-methylguanine residues, releasing 2,6-diamino-4-hydroxy-5-(N-methyl)formamidopyrimidine.. It carries out the reaction 2'-deoxyribonucleotide-(2'-deoxyribose 5'-phosphate)-2'-deoxyribonucleotide-DNA = a 3'-end 2'-deoxyribonucleotide-(2,3-dehydro-2,3-deoxyribose 5'-phosphate)-DNA + a 5'-end 5'-phospho-2'-deoxyribonucleoside-DNA + H(+). In terms of biological role, involved in base excision repair of DNA damaged by oxidation or by mutagenic agents. Acts as a DNA glycosylase that recognizes and removes damaged bases. Has a preference for oxidized purines, such as 7,8-dihydro-8-oxoguanine (8-oxoG). Has AP (apurinic/apyrimidinic) lyase activity and introduces nicks in the DNA strand. Cleaves the DNA backbone by beta-delta elimination to generate a single-strand break at the site of the removed base with both 3'- and 5'-phosphates. The polypeptide is Formamidopyrimidine-DNA glycosylase (Symbiobacterium thermophilum (strain DSM 24528 / JCM 14929 / IAM 14863 / T)).